An 82-amino-acid chain; its full sequence is Small ribosomal subunit protein uS17 (82 aa).

The protein belongs to the universal ribosomal protein uS17 family. As to quaternary structure, part of the 30S ribosomal subunit.

One of the primary rRNA binding proteins, it binds specifically to the 5'-end of 16S ribosomal RNA. The polypeptide is Small ribosomal subunit protein uS17 (Shewanella amazonensis (strain ATCC BAA-1098 / SB2B)).